Consider the following 234-residue polypeptide: Thymidylate kinase (234 aa).

20 to 27 lines the ATP pocket; sequence GIDASGKT.

The protein belongs to the thymidylate kinase family.

The enzyme catalyses dTMP + ATP = dTDP + ADP. In terms of biological role, phosphorylation of dTMP to form dTDP in both de novo and salvage pathways of dTTP synthesis. This Mycoplasmopsis pulmonis (strain UAB CTIP) (Mycoplasma pulmonis) protein is Thymidylate kinase.